The following is a 510-amino-acid chain: Photosystem II CP47 reaction center protein (510 aa).

Residues 2-16 (GLPWYRVHTVLINDP) are Cytoplasmic-facing. Residues 17-37 (GRLIAAHLMHTALVAGWAGSM) form a helical membrane-spanning segment. Over 38-94 (ALYELATFDPSDPVLNPMWRQGMFVLPFMARLGVTGSWSGWSITGETGIDPGFWSFE) the chain is Lumenal. A helical transmembrane segment spans residues 95-116 (GVALAHIVLSGLLFLAACWHWV). Topologically, residues 117-134 (YWDLELFRDPRTGEPALD) are cytoplasmic. The helical transmembrane segment at 135 to 157 (LPKMFGIHLFLAGLLCFGFGAFH) threads the bilayer. Residues 158–196 (LTGLFGPGMWVSDPYGLTGSVQPVAPEWGPDGFNPYNPG) are Lumenal-facing. Residues 197-218 (GVVAHHIAAGIVGIIAGLFHIL) form a helical membrane-spanning segment. Residues 219-233 (VRPPQRLYKALRMGN) lie on the Cytoplasmic side of the membrane. Residues 234 to 254 (IETVLSSSIAAVFFAAFVVAG) traverse the membrane as a helical segment. Residues 255–450 (TMWYGSATTP…GIFRTSPRGW (196 aa)) lie on the Lumenal side of the membrane. Residues 451–473 (FTFAHAVFALLFFFGHIWHGART) form a helical membrane-spanning segment. Residues 474–510 (LFRDVFSGIDPELSPEQVEWGFYQKVGDVTTRRKEAV) lie on the Cytoplasmic side of the membrane.

As to quaternary structure, PSII is composed of 1 copy each of membrane proteins PsbA, PsbB, PsbC, PsbD, PsbE, PsbF, PsbH, PsbI, PsbJ, PsbK, PsbL, PsbM, PsbT, PsbX, PsbY, PsbZ, Psb30/Ycf12, peripheral proteins PsbO, CyanoQ (PsbQ), PsbU, PsbV and a large number of cofactors. It forms dimeric complexes. Part of a photosystem II (PSII) assembly intermediate complex PSII-I; crystallized from a strain deleted of psbJ, it forms monomeric PSII before addition of the oxygen evolving complex. PSII-I includes 3 assembly factors not found in mature PSII (Psb27, Psb28 and Psb34). It depends on Binds multiple chlorophylls. PSII binds additional chlorophylls, carotenoids and specific lipids. as a cofactor.

The protein localises to the cellular thylakoid membrane. Functionally, one of the components of the core complex of photosystem II (PSII). It binds chlorophyll and helps catalyze the primary light-induced photochemical processes of PSII. PSII is a light-driven water:plastoquinone oxidoreductase, using light energy to abstract electrons from H(2)O, generating O(2) and a proton gradient subsequently used for ATP formation. This chain is Photosystem II CP47 reaction center protein, found in Thermosynechococcus vestitus (strain NIES-2133 / IAM M-273 / BP-1).